Consider the following 91-residue polypeptide: Signal recognition particle 19 kDa protein (91 aa).

The protein belongs to the SRP19 family. In terms of assembly, part of the signal recognition particle protein translocation system, which is composed of SRP and FtsY. Archaeal SRP consists of a 7S RNA molecule of 300 nucleotides and two protein subunits: SRP54 and SRP19.

The protein resides in the cytoplasm. In terms of biological role, involved in targeting and insertion of nascent membrane proteins into the cytoplasmic membrane. Binds directly to 7S RNA and mediates binding of the 54 kDa subunit of the SRP. The protein is Signal recognition particle 19 kDa protein of Methanothermobacter thermautotrophicus (strain ATCC 29096 / DSM 1053 / JCM 10044 / NBRC 100330 / Delta H) (Methanobacterium thermoautotrophicum).